A 522-amino-acid polypeptide reads, in one-letter code: Penicillin-sensitive carboxypeptidase A (522 aa).

Serine 94 functions as the Acyl-ester intermediate in the catalytic mechanism. Lysine 97 acts as the Proton acceptor in catalysis. The active site involves serine 351. A substrate-binding site is contributed by lysine 461.

The protein belongs to the peptidase S13 family.

The catalysed reaction is Preferential cleavage: (Ac)2-L-Lys-D-Ala-|-D-Ala. Also transpeptidation of peptidyl-alanyl moieties that are N-acyl substituents of D-alanine.. Inhibited by penicillin G. Its function is as follows. Carboxypeptidase. This chain is Penicillin-sensitive carboxypeptidase A (pscA), found in Dictyostelium discoideum (Social amoeba).